The chain runs to 199 residues: Large ribosomal subunit protein bL25 (199 aa).

The protein belongs to the bacterial ribosomal protein bL25 family. CTC subfamily. In terms of assembly, part of the 50S ribosomal subunit; part of the 5S rRNA/L5/L18/L25 subcomplex. Contacts the 5S rRNA. Binds to the 5S rRNA independently of L5 and L18.

Its function is as follows. This is one of the proteins that binds to the 5S RNA in the ribosome where it forms part of the central protuberance. The polypeptide is Large ribosomal subunit protein bL25 (Caulobacter sp. (strain K31)).